Consider the following 573-residue polypeptide: DNA ligase (573 aa).

An ATP-binding site is contributed by E248. K250 serves as the catalytic N6-AMP-lysine intermediate. Residues R255, R270, E299, F340, R432, and K438 each contribute to the ATP site.

It belongs to the ATP-dependent DNA ligase family. It depends on Mg(2+) as a cofactor.

It carries out the reaction ATP + (deoxyribonucleotide)n-3'-hydroxyl + 5'-phospho-(deoxyribonucleotide)m = (deoxyribonucleotide)n+m + AMP + diphosphate.. Its function is as follows. DNA ligase that seals nicks in double-stranded DNA during DNA replication, DNA recombination and DNA repair. This Methanocaldococcus jannaschii (strain ATCC 43067 / DSM 2661 / JAL-1 / JCM 10045 / NBRC 100440) (Methanococcus jannaschii) protein is DNA ligase.